The following is an 897-amino-acid chain: Alanine--tRNA ligase (897 aa).

Residues His581, His585, Cys684, and His688 each coordinate Zn(2+).

Belongs to the class-II aminoacyl-tRNA synthetase family. Zn(2+) serves as cofactor.

The protein localises to the cytoplasm. It catalyses the reaction tRNA(Ala) + L-alanine + ATP = L-alanyl-tRNA(Ala) + AMP + diphosphate. Catalyzes the attachment of alanine to tRNA(Ala) in a two-step reaction: alanine is first activated by ATP to form Ala-AMP and then transferred to the acceptor end of tRNA(Ala). Also edits incorrectly charged Ser-tRNA(Ala) and Gly-tRNA(Ala) via its editing domain. The chain is Alanine--tRNA ligase from Mycobacterium sp. (strain JLS).